The primary structure comprises 200 residues: LexA repressor (200 aa).

Residues Arg28–Lys48 constitute a DNA-binding region (H-T-H motif). Active-site for autocatalytic cleavage activity residues include Ser121 and Lys158.

The protein belongs to the peptidase S24 family. In terms of assembly, homodimer.

The catalysed reaction is Hydrolysis of Ala-|-Gly bond in repressor LexA.. Functionally, represses a number of genes involved in the response to DNA damage (SOS response), including recA and lexA. In the presence of single-stranded DNA, RecA interacts with LexA causing an autocatalytic cleavage which disrupts the DNA-binding part of LexA, leading to derepression of the SOS regulon and eventually DNA repair. The chain is LexA repressor from Hahella chejuensis (strain KCTC 2396).